Consider the following 245-residue polypeptide: Caffeoyl-CoA O-methyltransferase (245 aa).

Lys-19 is a substrate binding site. Residues Thr-61, Glu-83, 85–86 (GV), Ser-91, Asp-109, and Ala-138 each bind S-adenosyl-L-methionine. Position 161 (Asp-161) interacts with substrate. Asp-161 is an a divalent metal cation binding site. Residue Asp-163 coordinates S-adenosyl-L-methionine. The a divalent metal cation site is built by Asp-187 and Asn-188. Substrate is bound at residue Asn-192.

It belongs to the class I-like SAM-binding methyltransferase superfamily. Cation-dependent O-methyltransferase family. CCoAMT subfamily. A divalent metal cation serves as cofactor.

The enzyme catalyses (E)-caffeoyl-CoA + S-adenosyl-L-methionine = (E)-feruloyl-CoA + S-adenosyl-L-homocysteine + H(+). It functions in the pathway aromatic compound metabolism; phenylpropanoid biosynthesis. In terms of biological role, methylates caffeoyl-CoA to feruloyl-CoA and 5-hydroxyferuloyl-CoA to sinapoyl-CoA. Plays a role in the synthesis of feruloylated polysaccharides. Involved in the reinforcement of the plant cell wall. Also involved in the responding to wounding or pathogen challenge by the increased formation of cell wall-bound ferulic acid polymers. This chain is Caffeoyl-CoA O-methyltransferase (CCOAOMT), found in Zinnia elegans (Garden zinnia).